Reading from the N-terminus, the 625-residue chain is Thrombopoietin receptor (625 aa).

Positions 1-25 (MPSWALFMVTSCLLLALPNQAQVTS) are cleaved as a signal peptide. Residues 26 to 482 (QDVFLLALGT…RVSTGSETAW (457 aa)) are Extracellular-facing. Asn-117 is a glycosylation site (N-linked (GlcNAc...) asparagine). 2 Fibronectin type-III domains span residues 178 to 270 (NATA…PVTV) and 383 to 479 (PTPS…TGSE). Positions 465-469 (WSAWS) match the WSXWS motif motif. The helical transmembrane segment at 483 to 504 (ITLVTALLLVLSLSALLGLLLL) threads the bilayer. Topologically, residues 505–625 (KWQFPAHYRR…YLPLSYWQQP (121 aa)) are cytoplasmic. Residues 519 to 527 (LWPSLPDLH) carry the Box 1 motif motif. Residues Lys-544 and Lys-564 each participate in a glycyl lysine isopeptide (Lys-Gly) (interchain with G-Cter in ubiquitin) cross-link. Residues Tyr-616 and Tyr-621 each carry the phosphotyrosine modification.

It belongs to the type I cytokine receptor family. Type 1 subfamily. As to quaternary structure, homodimer. Interacts with ATXN2L. Interacts with JAK2 and TYK2; these interactions increase MPL localization to the cell membrane. Interacts with THPO. Interacts with SHIP/INPP5D. Interacts with kinases BTK and SYK. Ubiquitination at Lys-544 and Lys-564 targets MPL for degradation by both the lysosomal and proteasomal pathways. The E3 ubiquitin-protein ligase CBL significantly contributes to this ubiquitination.

The protein localises to the cell membrane. It is found in the golgi apparatus. Its subcellular location is the cell surface. Its function is as follows. Receptor for thrombopoietin that regulates hematopoietic stem cell renewal, megakaryocyte differentiation, and platelet formation. Upon activation by THPO, induces rapid tyrosine phosphorylation and activation of JAK2, providing docking sites for many signaling proteins such as STAT5, SHIP/INPP5D, GRB2, SOS1 and PI3K. In turn, These signaling cascades lead to the proliferation, survival, and differentiation of megakaryocytes, ultimately leading to increased platelet production. Functionally, acts as an inhibitor of thrombopoietin signaling by promoting protein down-regulation of full-length isoform Mpl-fl. The chain is Thrombopoietin receptor (Mpl) from Mus musculus (Mouse).